The chain runs to 310 residues: Methionyl-tRNA formyltransferase (310 aa).

A (6S)-5,6,7,8-tetrahydrofolate-binding site is contributed by 110-113; that stretch reads SLLP.

The protein belongs to the Fmt family.

It catalyses the reaction L-methionyl-tRNA(fMet) + (6R)-10-formyltetrahydrofolate = N-formyl-L-methionyl-tRNA(fMet) + (6S)-5,6,7,8-tetrahydrofolate + H(+). Its function is as follows. Attaches a formyl group to the free amino group of methionyl-tRNA(fMet). The formyl group appears to play a dual role in the initiator identity of N-formylmethionyl-tRNA by promoting its recognition by IF2 and preventing the misappropriation of this tRNA by the elongation apparatus. This is Methionyl-tRNA formyltransferase from Streptomyces griseus subsp. griseus (strain JCM 4626 / CBS 651.72 / NBRC 13350 / KCC S-0626 / ISP 5235).